The sequence spans 190 residues: Small ribosomal subunit protein mS23 (190 aa).

Ala-2 carries the N-acetylalanine modification. Residue Lys-83 is modified to N6-succinyllysine. Lys-102 is subject to N6-acetyllysine. A disordered region spans residues 137 to 190 (KARTQQEGSQVSRKSESMGVESQTALEENPPLKEVPQAQHLESPGEESKGLSPP).

The protein belongs to the mitochondrion-specific ribosomal protein mS23 family. As to quaternary structure, component of the mitochondrial ribosome small subunit (28S) which comprises a 12S rRNA and about 30 distinct proteins.

It is found in the mitochondrion. This Bos taurus (Bovine) protein is Small ribosomal subunit protein mS23.